We begin with the raw amino-acid sequence, 248 residues long: 2,3-bisphosphoglycerate-dependent phosphoglycerate mutase (248 aa).

Substrate-binding positions include 8 to 15 (RHGESVWN), 21 to 22 (TG), arginine 60, 87 to 90 (ERHY), lysine 98, and 114 to 115 (RR). The Tele-phosphohistidine intermediate role is filled by histidine 9. Residue glutamate 87 is the Proton donor/acceptor of the active site. Positions 116 to 135 (SYDTPPPPMEVSDPRHPSHD) are disordered. 183–184 (GN) lines the substrate pocket.

This sequence belongs to the phosphoglycerate mutase family. BPG-dependent PGAM subfamily. Homodimer.

It carries out the reaction (2R)-2-phosphoglycerate = (2R)-3-phosphoglycerate. The protein operates within carbohydrate degradation; glycolysis; pyruvate from D-glyceraldehyde 3-phosphate: step 3/5. Its function is as follows. Catalyzes the interconversion of 2-phosphoglycerate and 3-phosphoglycerate. In Bdellovibrio bacteriovorus (strain ATCC 15356 / DSM 50701 / NCIMB 9529 / HD100), this protein is 2,3-bisphosphoglycerate-dependent phosphoglycerate mutase.